We begin with the raw amino-acid sequence, 1755 residues long: BCL-6 corepressor (1755 aa).

A disordered region spans residues 309-345; sequence NSKQPRVPSAKAVTSGLPGDTALLLPPSPRPSPRVHL. Phosphoserine occurs at positions 336, 340, 365, and 367. Residues 388–438 form a disordered region; the sequence is LSNGKYPKAPEGGEGAQPVPGHARKTAVQDRKDGSSPPLLEKQTVTKDVTD. Lys392 carries the N6-acetyllysine modification. Ser423 is subject to Phosphoserine. The interaction with BCL6 stretch occupies residues 498-514; sequence RSEIISTAPSSWVVPGP. Residues 557-578 show a composition bias toward low complexity; sequence VSGSVSSAGRPASASPAPNANA. 4 disordered regions span residues 557–641, 737–760, 773–794, and 815–844; these read VSGS…IFLS, ITKE…DPTL, TKLH…WNQG, and AKTD…SVEP. The segment covering 580–594 has biased composition (polar residues); sequence GTKTSRSSVETTPSV. Over residues 605–620 the composition is skewed to low complexity; sequence PAKHSSSTSSKGAKAS. Residues 775-785 are compositionally biased toward basic and acidic residues; the sequence is LHPDVPTDKNL. Lys786 is covalently cross-linked (Glycyl lysine isopeptide (Lys-Gly) (interchain with G-Cter in SUMO2)). Lys872 participates in a covalent cross-link: Glycyl lysine isopeptide (Lys-Gly) (interchain with G-Cter in SUMO2). Disordered stretches follow at residues 1071–1187 and 1220–1328; these read IAEQ…EDPH and QQVS…KENQ. Residues 1076 to 1107 show a composition bias toward basic and acidic residues; the sequence is ESERCEYSVGNKHRDPFEAPEDKDLPVEKYFV. A phosphoserine mark is found at Ser1127 and Ser1139. The span at 1166 to 1175 shows a compositional bias: basic and acidic residues; sequence SKDDWPEREM. Residues 1238 to 1252 show a composition bias toward polar residues; the sequence is TQATQPEAIPQGTNI. Residues 1253–1279 are compositionally biased toward basic and acidic residues; the sequence is TEEKPGRKRAEAKGNRSWSEESLKPSD. Lys1256 is covalently cross-linked (Glycyl lysine isopeptide (Lys-Gly) (interchain with G-Cter in SUMO2)). Residues Ser1290, Ser1345, and Ser1410 each carry the phosphoserine modification. Lys1413 participates in a covalent cross-link: Glycyl lysine isopeptide (Lys-Gly) (interchain with G-Cter in SUMO2). The segment covering 1430–1447 has biased composition (polar residues); it reads QSTQLPCSSSPQETTQSR. The segment at 1430-1451 is disordered; sequence QSTQLPCSSSPQETTQSRPMPP. ANK repeat units lie at residues 1462–1495, 1496–1525, and 1529–1558; these read AGET…HRDN, AGYC…DVNC, and DGTR…DPTL. The necessary and sufficient for interaction with PCGF1 stretch occupies residues 1634 to 1748; sequence SDVFEFEFSE…SSVEWLHPSD (115 aa).

The protein belongs to the BCOR family. In terms of assembly, interacts with BCL6; the interaction is direct. Forms ternary complexes with BCL6 and SMRT/NCOR2 on selected target genes promoters; potently repress expression. Can interact with HDAC1, HDAC3 and HDAC5. Interacts with PCGF1; the interaction is direct. Interacts with KDM2B. Component of an approximately 800 kDa repressive BCOR complex at least composed of BCOR, RYBP, PCGF1, RING1, RNF2/RING2, KDM2B and SKP1. Interacts with CPNE4 (via VWFA domain). Isoform 1 may interact with MLLT3/AF9. In terms of tissue distribution, ubiquitously expressed.

Its subcellular location is the nucleus. Transcriptional corepressor. May specifically inhibit gene expression when recruited to promoter regions by sequence-specific DNA-binding proteins such as BCL6 and MLLT3. This repression may be mediated at least in part by histone deacetylase activities which can associate with this corepressor. Involved in the repression of TFAP2A; impairs binding of BCL6 and KDM2B to TFAP2A promoter regions. Via repression of TFAP2A acts as a negative regulator of osteo-dentiogenic capacity in adult stem cells; the function implies inhibition of methylation on histone H3 'Lys-4' (H3K4me3) and 'Lys-36' (H3K36me2). This chain is BCL-6 corepressor (BCOR), found in Homo sapiens (Human).